A 346-amino-acid chain; its full sequence is MKVLGIETSCDDCCVAVVENGIHILSNIKLNQTEHKKYYGIVPEIASRLHTEAIMSVCIKALKKANTKISEIDLIAVTSRPGLIGSLIVGLNFAKGLAISLKKPIICIDHILGHLYAPLMHSKIEYPFISLLLSGGHTLIAKQKNFDDVEILGRTLDDACGEAFDKVAKHYDMGFPGGPNIEQISKNGDENTFQFPVTTFKKKENWYDFSYSGLKTACIHQLEKFKSKDNPTTKNNIAASFQKAAFENLITPLKRAIKDTQINKLVIAGGVASNLYLREKIDKLKIQTYYPPLDLCTDNGAMIAGLGFNMYLKYGESPIEIDANSRIENYKNQYRGKNNEKNFSNA.

2 residues coordinate Fe cation: histidine 110 and histidine 114. Substrate-binding positions include 132–136, aspartate 165, glycine 178, and asparagine 274; that span reads LLSGG. Aspartate 298 is a Fe cation binding site.

This sequence belongs to the KAE1 / TsaD family. It depends on Fe(2+) as a cofactor.

It localises to the cytoplasm. It carries out the reaction L-threonylcarbamoyladenylate + adenosine(37) in tRNA = N(6)-L-threonylcarbamoyladenosine(37) in tRNA + AMP + H(+). Its function is as follows. Required for the formation of a threonylcarbamoyl group on adenosine at position 37 (t(6)A37) in tRNAs that read codons beginning with adenine. Is involved in the transfer of the threonylcarbamoyl moiety of threonylcarbamoyl-AMP (TC-AMP) to the N6 group of A37, together with TsaE and TsaB. TsaD likely plays a direct catalytic role in this reaction. The sequence is that of tRNA N6-adenosine threonylcarbamoyltransferase from Borreliella burgdorferi (strain ATCC 35210 / DSM 4680 / CIP 102532 / B31) (Borrelia burgdorferi).